Here is a 125-residue protein sequence, read N- to C-terminus: Large ribosomal subunit protein bL12 (125 aa).

Residues 95 to 125 form a disordered region; that stretch reads APKPIKEGVDKKTAEEAKKKLEEAGAKAELK.

It belongs to the bacterial ribosomal protein bL12 family. Homodimer. Part of the ribosomal stalk of the 50S ribosomal subunit. Forms a multimeric L10(L12)X complex, where L10 forms an elongated spine to which 2 to 4 L12 dimers bind in a sequential fashion. Binds GTP-bound translation factors.

Its function is as follows. Forms part of the ribosomal stalk which helps the ribosome interact with GTP-bound translation factors. Is thus essential for accurate translation. The polypeptide is Large ribosomal subunit protein bL12 (Polynucleobacter necessarius subsp. necessarius (strain STIR1)).